A 138-amino-acid polypeptide reads, in one-letter code: uncharacterized protein (138 aa).

Residues 74-96 form a disordered region; that stretch reads RRRSPSLPARRPPTPREDALEDY. Residues 87 to 96 are compositionally biased toward basic and acidic residues; the sequence is TPREDALEDY.

This is an uncharacterized protein from Orgyia pseudotsugata (Douglas-fir tussock moth).